The chain runs to 201 residues: 3-isopropylmalate dehydratase small subunit (201 aa).

Belongs to the LeuD family. LeuD type 1 subfamily. As to quaternary structure, heterodimer of LeuC and LeuD.

The enzyme catalyses (2R,3S)-3-isopropylmalate = (2S)-2-isopropylmalate. Its pathway is amino-acid biosynthesis; L-leucine biosynthesis; L-leucine from 3-methyl-2-oxobutanoate: step 2/4. Functionally, catalyzes the isomerization between 2-isopropylmalate and 3-isopropylmalate, via the formation of 2-isopropylmaleate. The sequence is that of 3-isopropylmalate dehydratase small subunit from Shewanella frigidimarina (strain NCIMB 400).